We begin with the raw amino-acid sequence, 771 residues long: Solute carrier family 7 member 14 (771 aa).

6 helical membrane-spanning segments follow: residues 58-78, 83-103, 119-141, 187-207, 216-236, and 251-271; these read LISLGVGSCVGTGMYVVSGLV, AGPGVIVSFIIAAVASILSGV, AYTYSYVTVGEFVAFFIGWNLIL, YPDLLALLIAVIVTIIVALGV, VLNVLNLAVWVFIMIAGLFFI, and WSGVLQGAATCFYAFIGFDII. An N-linked (GlcNAc...) asparagine glycan is attached at Asn282. A run of 5 helical transmembrane segments spans residues 291–311, 336–356, 360–380, 384–404, and 407–427; these read ASLVICLTAYVSVSVILTLMV, FVVAIGSVAGLTVSLLGSLFP, VIYAMAGDGLLFRFLAHVSSY, PVVACIVSGFLAALLALLVSL, and LIEMMSIGTLLAYTLVSVCVL. Residues Ser465, Ser468, and Ser488 each carry the phosphoserine modification. The next 4 membrane-spanning stretches (helical) occupy residues 565-585, 596-616, 628-648, and 655-675; these read VTICVLLLFILMFIFCSFIIF, WAILLVVLMVLLISTLVFVIL, MAPCLPFVPAFAMLVNIYLML, and WIRFAVWCFVGLLIYFGYGIW. Asn676 carries N-linked (GlcNAc...) asparagine glycosylation. The segment at 736 to 771 is disordered; that stretch reads DAKANGRTSSKAKSKSKHKQNSEALIANDELDYSPE. Residues 745–754 are compositionally biased toward basic residues; that stretch reads SKAKSKSKHK. Residues Ser757 and Ser769 each carry the phosphoserine modification.

This sequence belongs to the amino acid-polyamine-organocation (APC) superfamily. Cationic amino acid transporter (CAT) (TC 2.A.3.3) family. Expressed in skin fibroblasts.

The protein resides in the lysosome membrane. It catalyses the reaction 4-aminobutanoate(in) = 4-aminobutanoate(out). In terms of biological role, imports 4-aminobutanoate (GABA) into lysosomes. May act as a GABA sensor that regulates mTORC2-dependent INS signaling and gluconeogenesis. The transport mechanism and substrate selectivity remain to be elucidated. This is Solute carrier family 7 member 14 from Homo sapiens (Human).